Reading from the N-terminus, the 390-residue chain is Putative nickel insertion protein (390 aa).

Belongs to the LarC family.

This chain is Putative nickel insertion protein, found in Myxococcus xanthus (strain DK1622).